We begin with the raw amino-acid sequence, 220 residues long: Small ribosomal subunit protein uS3 (220 aa).

The 70-residue stretch at 24–93 (IKEFLEYRLS…NPQIDVIDVS (70 aa)) folds into the KH type-2 domain.

This sequence belongs to the universal ribosomal protein uS3 family. In terms of assembly, part of the 30S ribosomal subunit.

Its function is as follows. Binds the lower part of the 30S subunit head. This Pyrobaculum arsenaticum (strain DSM 13514 / JCM 11321 / PZ6) protein is Small ribosomal subunit protein uS3.